The chain runs to 283 residues: Thymidylate synthase (283 aa).

Arginine 22 contacts dUMP. Cysteine 160 (nucleophile) is an active-site residue. DUMP-binding positions include 180-183 (RSCD), asparagine 191, and 221-223 (HIY). Aspartate 183 is a (6R)-5,10-methylene-5,6,7,8-tetrahydrofolate binding site. Serine 282 is a binding site for (6R)-5,10-methylene-5,6,7,8-tetrahydrofolate.

This sequence belongs to the thymidylate synthase family. Bacterial-type ThyA subfamily. As to quaternary structure, homodimer.

The protein resides in the cytoplasm. The enzyme catalyses dUMP + (6R)-5,10-methylene-5,6,7,8-tetrahydrofolate = 7,8-dihydrofolate + dTMP. The protein operates within pyrimidine metabolism; dTTP biosynthesis. Catalyzes the reductive methylation of 2'-deoxyuridine-5'-monophosphate (dUMP) to 2'-deoxythymidine-5'-monophosphate (dTMP) while utilizing 5,10-methylenetetrahydrofolate (mTHF) as the methyl donor and reductant in the reaction, yielding dihydrofolate (DHF) as a by-product. This enzymatic reaction provides an intracellular de novo source of dTMP, an essential precursor for DNA biosynthesis. This Histophilus somni (strain 129Pt) (Haemophilus somnus) protein is Thymidylate synthase.